We begin with the raw amino-acid sequence, 210 residues long: CKLF-like MARVEL transmembrane domain-containing protein 2B (210 aa).

4 helical membrane passes run 35–55, 65–85, 103–123, and 127–147; these read FWAQ…IAAM, PIVI…FFLY, LMND…ALEA, and LPVP…ISII. Residues 35 to 157 enclose the MARVEL domain; sequence FWAQGHAECK…DLCLQRRQFK (123 aa).

The protein belongs to the chemokine-like factor family.

The protein resides in the membrane. The chain is CKLF-like MARVEL transmembrane domain-containing protein 2B (Cmtm2b) from Mus musculus (Mouse).